We begin with the raw amino-acid sequence, 488 residues long: RuvB-like helicase 1 (488 aa).

Positions 1–11 (MATANTSSGSM) are enriched in polar residues. The interval 1 to 29 (MATANTSSGSMNGVGPVTMDSSTSGASRE) is disordered. An ATP-binding site is contributed by 87–94 (GGPGTGKT).

Belongs to the RuvB family. In terms of assembly, may form heterododecamers with RVB2. Component of the SWR1 chromatin remodeling complex, the INO80 chromatin remodeling complex, and of the R2TP complex.

It localises to the nucleus. It carries out the reaction ATP + H2O = ADP + phosphate + H(+). Its function is as follows. DNA helicase which participates in several chromatin remodeling complexes, including the SWR1 and the INO80 complexes. The SWR1 complex mediates the ATP-dependent exchange of histone H2A for the H2A variant HZT1 leading to transcriptional regulation of selected genes by chromatin remodeling. The INO80 complex remodels chromatin by shifting nucleosomes and is involved in DNA repair. Also involved in pre-rRNA processing. The sequence is that of RuvB-like helicase 1 (RVB1) from Mycosarcoma maydis (Corn smut fungus).